A 313-amino-acid chain; its full sequence is Protein PHOSPHATE-INDUCED 1 (313 aa).

The signal sequence occupies residues 1–22; the sequence is MATSHFILKLFLVISFCNVCFA. N-linked (GlcNAc...) asparagine glycosylation occurs at asparagine 119.

This sequence belongs to the EXORDIUM family.

It is found in the secreted. The protein resides in the extracellular space. Its subcellular location is the apoplast. Functionally, may be involved in the regulation of cell division. The chain is Protein PHOSPHATE-INDUCED 1 from Nicotiana tabacum (Common tobacco).